We begin with the raw amino-acid sequence, 340 residues long: Glyceraldehyde-3-phosphate dehydrogenase (340 aa).

NAD(+) contacts are provided by residues 11-12 (SI) and G111. Position 140-142 (140-142 (SCN)) interacts with D-glyceraldehyde 3-phosphate. The Nucleophile role is filled by C141. R169 contributes to the NAD(+) binding site. 195-196 (HG) serves as a coordination point for D-glyceraldehyde 3-phosphate. Q303 lines the NAD(+) pocket.

This sequence belongs to the glyceraldehyde-3-phosphate dehydrogenase family. As to quaternary structure, homotetramer.

It localises to the cytoplasm. The enzyme catalyses D-glyceraldehyde 3-phosphate + phosphate + NADP(+) = (2R)-3-phospho-glyceroyl phosphate + NADPH + H(+). It carries out the reaction D-glyceraldehyde 3-phosphate + phosphate + NAD(+) = (2R)-3-phospho-glyceroyl phosphate + NADH + H(+). It participates in carbohydrate degradation; glycolysis; pyruvate from D-glyceraldehyde 3-phosphate: step 1/5. In Methanococcus maripaludis (strain C5 / ATCC BAA-1333), this protein is Glyceraldehyde-3-phosphate dehydrogenase.